The following is a 398-amino-acid chain: tRNA (guanine-N(7)-)-methyltransferase (398 aa).

Residues glutamate 124, glutamate 149, and aspartate 176 each contribute to the S-adenosyl-L-methionine site. Aspartate 232 contributes to the substrate binding site.

It belongs to the class I-like SAM-binding methyltransferase superfamily. TrmB family.

The enzyme catalyses guanosine(46) in tRNA + S-adenosyl-L-methionine = N(7)-methylguanosine(46) in tRNA + S-adenosyl-L-homocysteine. The protein operates within tRNA modification; N(7)-methylguanine-tRNA biosynthesis. In terms of biological role, catalyzes the formation of N(7)-methylguanine at position 46 (m7G46) in tRNA. In Helicobacter acinonychis (strain Sheeba), this protein is tRNA (guanine-N(7)-)-methyltransferase.